The chain runs to 132 residues: Small ribosomal subunit protein uS8 (132 aa).

This sequence belongs to the universal ribosomal protein uS8 family. Part of the 30S ribosomal subunit. Contacts proteins S5 and S12.

Its function is as follows. One of the primary rRNA binding proteins, it binds directly to 16S rRNA central domain where it helps coordinate assembly of the platform of the 30S subunit. This is Small ribosomal subunit protein uS8 from Anaeromyxobacter dehalogenans (strain 2CP-C).